A 485-amino-acid chain; its full sequence is Vacuolar fusion protein CCZ1 homolog (485 aa).

This sequence belongs to the CCZ1 family. In terms of assembly, component of the Mon1-Ccz1 guanyl-nucleotide exchange factor complex made up of Mon1, Ccz1 and Bulli; the interaction of Bulli with the Mon1-Ccz1 heterodimer is mediated via the C-terminal Mic1 domain of Bulli. Mon1 and Ccz1 form a stable complex which displays Rab7 GEF activity with or without Bulli; GEF activity is enhanced by Bulli possibly by improving membrane association of the complex. Interacts with Rab5 and Rab7; preferentially binds GTP-bound Rab5 and GDP-bound Rab7.

The protein localises to the cytoplasm. It localises to the cytosol. Its activity is regulated as follows. The Rab7 guanyl-nucleotide exchange factor (GEF) activity of the Mon1-Ccz1 complex is autoinhibited by the N-terminal disordered region of Mon1. GEF activity is stimulated by Rab5-mediated recruitment to membranes. In terms of biological role, part of the Mon1-Ccz1 guanyl-nucleotide exchange factor complex specific for Rab7 that promotes the exchange of GDP to GTP, converting Rab7 from an inactive GDP-bound form into an active GTP-bound form. Required for recruitment of Rab7 to endosomal and autophagosomal membranes to mediate endolysosomal and autolysosomal vesicle maturation. Required for fusion of multivesicular bodies and lysosomes but not their formation or trafficking. Involved in the replacement of Rab5 (and possibly Rab4) with Rab7, also known as Rab conversion or the Rab cascade, during endosomal maturation. The Mon1-Ccz1 complex is recruited to phosphatidylinositol 3-phosphate (PtdIns[3]P) enriched membranes by Rab5, which stimulates recruitment and guanyl-nucleotide exchange of Rab7. Together with Rab7 required for autolysosome formation in fat cells and autophagic degradation during starvation-induced basal and developmental autophagy. The protein is Vacuolar fusion protein CCZ1 homolog of Drosophila melanogaster (Fruit fly).